The following is a 187-amino-acid chain: Large ribosomal subunit protein uL6c (187 aa).

The protein belongs to the universal ribosomal protein uL6 family. As to quaternary structure, part of the 50S ribosomal subunit.

The protein resides in the plastid. It localises to the chloroplast. Its function is as follows. Binds 23S rRNA. The protein is Large ribosomal subunit protein uL6c (rpl6) of Thalassiosira pseudonana (Marine diatom).